The sequence spans 273 residues: Putative pyruvate, phosphate dikinase regulatory protein (273 aa).

153–160 (GISRTSKT) serves as a coordination point for ADP.

The protein belongs to the pyruvate, phosphate/water dikinase regulatory protein family. PDRP subfamily.

The catalysed reaction is N(tele)-phospho-L-histidyl/L-threonyl-[pyruvate, phosphate dikinase] + ADP = N(tele)-phospho-L-histidyl/O-phospho-L-threonyl-[pyruvate, phosphate dikinase] + AMP + H(+). It catalyses the reaction N(tele)-phospho-L-histidyl/O-phospho-L-threonyl-[pyruvate, phosphate dikinase] + phosphate + H(+) = N(tele)-phospho-L-histidyl/L-threonyl-[pyruvate, phosphate dikinase] + diphosphate. Functionally, bifunctional serine/threonine kinase and phosphorylase involved in the regulation of the pyruvate, phosphate dikinase (PPDK) by catalyzing its phosphorylation/dephosphorylation. This chain is Putative pyruvate, phosphate dikinase regulatory protein, found in Rhizobium leguminosarum bv. trifolii (strain WSM2304).